The chain runs to 317 residues: tRNA dimethylallyltransferase (317 aa).

14–21 (GPTASGKS) contacts ATP. 16-21 (TASGKS) is a binding site for substrate. 2 interaction with substrate tRNA regions span residues 39-42 (DSVL) and 163-167 (QRIQR).

This sequence belongs to the IPP transferase family. Monomer. Mg(2+) is required as a cofactor.

It catalyses the reaction adenosine(37) in tRNA + dimethylallyl diphosphate = N(6)-dimethylallyladenosine(37) in tRNA + diphosphate. Catalyzes the transfer of a dimethylallyl group onto the adenine at position 37 in tRNAs that read codons beginning with uridine, leading to the formation of N6-(dimethylallyl)adenosine (i(6)A). The sequence is that of tRNA dimethylallyltransferase from Xylella fastidiosa (strain 9a5c).